The following is a 238-amino-acid chain: Sugar fermentation stimulation protein homolog (238 aa).

The protein belongs to the SfsA family.

The sequence is that of Sugar fermentation stimulation protein homolog from Pseudoalteromonas translucida (strain TAC 125).